A 605-amino-acid polypeptide reads, in one-letter code: Formin-binding protein 1-like (605 aa).

Positions 1-263 constitute an F-BAR domain; that stretch reads MSWGTELWDQ…AAKSVDERRD (263 aa). Residues 66–258 are a coiled coil; sequence FTSCIAFFNI…EGMILAAKSV (193 aa). The interaction with CDC42 stretch occupies residues 245–535; sequence SKCLEGMILA…EFDDEFEDDD (291 aa). S295 is modified (phosphoserine). Positions 392–484 form a coiled coil; that stretch reads LEDFSHLPPE…VEGKTGIRGD (93 aa). Residues 397-474 form the REM-1 domain; sequence HLPPEQRRKK…IHKNEAWLSE (78 aa). Residues 482–538 are disordered; the sequence is RGDRRHSSDINHLVTQGRESPEGSYTDDANQEVRGPPQQHGHHSEFDDEFEDDDPLP. A phosphoserine mark is found at S488, S501, and S505. The tract at residues 522–605 is interaction with DNM1; that stretch reads GHHSEFDDEF…VTLEKSSKGS (84 aa). Residues 527 to 536 are compositionally biased toward acidic residues; that stretch reads FDDEFEDDDP. The SH3 domain occupies 538–599; it reads PAIGHCKAIY…PTTYIDVTLE (62 aa). Residues 541-597 are interaction with DNM2 and WASL; it reads GHCKAIYPFDGHNEGTLAMKEGEVLYIIEEDKGDGWTRARRQNGEEGYVPTTYIDVT. An interaction with DAAM1, DIAPH1 and DIAPH2 region spans residues 541–605; it reads GHCKAIYPFD…VTLEKSSKGS (65 aa).

It belongs to the FNBP1 family. In terms of assembly, homodimerizes, the dimers can polymerize end-to-end to form filamentous structures. Interacts with GTP-bound CDC42. Interacts with DAAM1, DIAPH1, DIAPH2, DNM1, DNM2 and WASL/N-WASP. Interacts with ATG3. Interacts (via SH3 domain) with ABI1, WASF2, CDC42 and WIPF1.

It is found in the cytoplasm. Its subcellular location is the cytoskeleton. The protein localises to the cell cortex. It localises to the cytoplasmic vesicle. The protein resides in the cell membrane. Its function is as follows. Required to coordinate membrane tubulation with reorganization of the actin cytoskeleton during endocytosis. May bind to lipids such as phosphatidylinositol 4,5-bisphosphate and phosphatidylserine and promote membrane invagination and the formation of tubules. Also promotes CDC42-induced actin polymerization by activating the WASL-WASPIP complex, the predominant form of WASL/N-WASP in cells. Actin polymerization may promote the fission of membrane tubules to form endocytic vesicles. Essential for autophagy of intracellular bacterial pathogens. The sequence is that of Formin-binding protein 1-like (Fnbp1l) from Mus musculus (Mouse).